Here is a 289-residue protein sequence, read N- to C-terminus: Membrane protein insertase YidC (289 aa).

A signal peptide spans 1–19; the sequence is MKKKALLPLLLGIMVFLAG. A lipid anchor (N-palmitoyl cysteine) is attached at Cys20. Cys20 carries the S-diacylglycerol cysteine lipid modification. Helical transmembrane passes span 55 to 75, 133 to 153, 177 to 197, 210 to 230, and 231 to 251; these read YGLA…PFML, MLGC…FFVL, IWIT…STFS, MIIS…ALGL, and YWSV…AYYS. The interval 268 to 289 is disordered; it reads EHGGSGNSKGAKVVSKKNKKKK.

It belongs to the OXA1/ALB3/YidC family. Type 2 subfamily.

The protein resides in the cell membrane. Its function is as follows. Required for the insertion and/or proper folding and/or complex formation of integral membrane proteins into the membrane. Involved in integration of membrane proteins that insert both dependently and independently of the Sec translocase complex, as well as at least some lipoproteins. This chain is Membrane protein insertase YidC, found in Staphylococcus carnosus (strain TM300).